The sequence spans 246 residues: Putative outer membrane protein YiaT (246 aa).

The N-terminal stretch at 1-21 (MLINRNIVALFALPFMASATA) is a signal peptide.

It belongs to the MipA/OmpV family.

It is found in the cell outer membrane. In Escherichia coli O157:H7, this protein is Putative outer membrane protein YiaT (yiaT).